A 692-amino-acid chain; its full sequence is Aspartate--tRNA ligase, mitochondrial (692 aa).

The transit peptide at 1-61 directs the protein to the mitochondrion; it reads MNRVILKDSK…RNFTNTINNN (61 aa). Glu-264 lines the L-aspartate pocket. An aspartate region spans residues 287-290; sequence QQYK. Arg-309 contacts L-aspartate. Residues 309 to 311 and Glu-590 each bind ATP; that span reads RDE. Position 597 (Arg-597) interacts with L-aspartate. Residue 642–645 coordinates ATP; it reads GFDR.

It belongs to the class-II aminoacyl-tRNA synthetase family. Type 1 subfamily.

The protein localises to the mitochondrion matrix. It carries out the reaction tRNA(Asp) + L-aspartate + ATP = L-aspartyl-tRNA(Asp) + AMP + diphosphate. This Dictyostelium discoideum (Social amoeba) protein is Aspartate--tRNA ligase, mitochondrial (maspS).